Here is a 236-residue protein sequence, read N- to C-terminus: Large ribosomal subunit protein uL1 (236 aa).

Belongs to the universal ribosomal protein uL1 family. Part of the 50S ribosomal subunit.

Functionally, binds directly to 23S rRNA. The L1 stalk is quite mobile in the ribosome, and is involved in E site tRNA release. Protein L1 is also a translational repressor protein, it controls the translation of the L11 operon by binding to its mRNA. The protein is Large ribosomal subunit protein uL1 of Corynebacterium glutamicum (strain R).